Here is a 487-residue protein sequence, read N- to C-terminus: GTPase Der (487 aa).

EngA-type G domains lie at 3–167 and 203–378; these read LTLA…DEME and LQVA…EVWN. GTP contacts are provided by residues 9–16, 56–60, and 119–122; these read GRPNVGKS, DTAGL, and NKAE. The span at 167 to 190 shows a compositional bias: acidic residues; sequence EQQAEEQAPETDVDLDPEDEDGEE. Residues 167 to 191 form a disordered region; that stretch reads EQQAEEQAPETDVDLDPEDEDGEEV. GTP contacts are provided by residues 209–216, 256–260, and 321–324; these read GRPNAGKS, DTAGM, and NKWD. The 87-residue stretch at 379–465 folds into the KH-like domain; that stretch reads RRIPTAALNR…RLTLRGQGDK (87 aa). Residues 458-487 form a disordered region; the sequence is TLRGQGDKNPYKGRRKKNAGALAKHLKSRG. The span at 468-487 shows a compositional bias: basic residues; it reads YKGRRKKNAGALAKHLKSRG.

This sequence belongs to the TRAFAC class TrmE-Era-EngA-EngB-Septin-like GTPase superfamily. EngA (Der) GTPase family. In terms of assembly, associates with the 50S ribosomal subunit.

Functionally, GTPase that plays an essential role in the late steps of ribosome biogenesis. This chain is GTPase Der, found in Ruegeria pomeroyi (strain ATCC 700808 / DSM 15171 / DSS-3) (Silicibacter pomeroyi).